Here is a 365-residue protein sequence, read N- to C-terminus: Mitogen-activated protein kinase HOG1 (365 aa).

A Protein kinase domain is found at 20-306 (YSDLQPVGMG…ATNALAHEYL (287 aa)). ATP-binding positions include 26-34 (VGMGAFGLV) and lysine 49. Aspartate 148 serves as the catalytic Proton acceptor. The short motif at 178–180 (TGY) is the TXY element.

It belongs to the protein kinase superfamily. Ser/Thr protein kinase family. MAP kinase subfamily. HOG1 sub-subfamily. Requires Mg(2+) as cofactor.

Its subcellular location is the cytoplasm. It is found in the nucleus. It carries out the reaction L-seryl-[protein] + ATP = O-phospho-L-seryl-[protein] + ADP + H(+). The catalysed reaction is L-threonyl-[protein] + ATP = O-phospho-L-threonyl-[protein] + ADP + H(+). In terms of biological role, proline-directed serine/threonine-protein kinase involved in a signal transduction pathway that is activated by changes in the osmolarity of the extracellular environment. Controls osmotic regulation of transcription of target genes. Involved in environmental stress response, hyphal growth, conidiation and possibly secondary metabolism such as ustiloxin biosynthesis or the biosynthesis of other phytotoxic compounds that are inhibitory to rice shoot growth during seed germination. Plays a key role in responses to cell wall and membrane stresses but not oxidative stress. The polypeptide is Mitogen-activated protein kinase HOG1 (Ustilaginoidea virens (Rice false smut fungus)).